A 413-amino-acid polypeptide reads, in one-letter code: Dolichyl-diphosphooligosaccharide--protein glycosyltransferase 48 kDa subunit (413 aa).

Residues Gly-1–Tyr-383 lie on the Lumenal side of the membrane. A helical transmembrane segment spans residues Pro-384–Leu-404. Over His-405–Asp-413 the chain is Cytoplasmic.

This sequence belongs to the DDOST 48 kDa subunit family. As to quaternary structure, component of the oligosaccharyltransferase (OST) complex.

It localises to the endoplasmic reticulum. The protein resides in the endoplasmic reticulum membrane. The protein operates within protein modification; protein glycosylation. Subunit of the oligosaccharyl transferase (OST) complex that catalyzes the initial transfer of a defined glycan (Glc(3)Man(9)GlcNAc(2) in eukaryotes) from the lipid carrier dolichol-pyrophosphate to an asparagine residue within an Asn-X-Ser/Thr consensus motif in nascent polypeptide chains, the first step in protein N-glycosylation. N-glycosylation occurs cotranslationally and the complex associates with the Sec61 complex at the channel-forming translocon complex that mediates protein translocation across the endoplasmic reticulum (ER). All subunits are required for a maximal enzyme activity. Required for the assembly of both SST3A- and SS3B-containing OST complexes. In Gallus gallus (Chicken), this protein is Dolichyl-diphosphooligosaccharide--protein glycosyltransferase 48 kDa subunit.